The primary structure comprises 1931 residues: Chitin synthase 5 (1931 aa).

Residues 11-777 form the Myosin motor domain; it reads LGVTDLSSLA…LFRFLEDRLR (767 aa). 122–129 is a binding site for ATP; sequence GPTGSGKS. Asn-510, Asn-538, and Asn-676 each carry an N-linked (GlcNAc...) asparagine glycan. The segment at 655–677 is actin-binding; that stretch reads VDSLLKSFDQTQTWYIFALRPND. Positions 798–817 are disordered; it reads DPFSPHRYQPTSFDSQDHVY. N-linked (GlcNAc...) asparagine glycosylation occurs at Asn-842. 2 helical membrane passes run 912 to 932 and 951 to 971; these read WVWL…SKIA and MIIW…GPVI. N-linked (GlcNAc...) asparagine glycosylation is found at Asn-1062, Asn-1078, and Asn-1146. Residues 1220–1240 traverse the membrane as a helical segment; the sequence is ILLALSCVMVAVIGFKFLSAL. N-linked (GlcNAc...) asparagine glycosylation occurs at Asn-1583. Transmembrane regions (helical) follow at residues 1615-1635, 1641-1661, and 1668-1688; these read LSTI…YLIV, IPTL…MIFI, and MIAW…LLPL. The interval 1826 to 1847 is disordered; that stretch reads AHRPSLDDTSSFHQPYQPAPRP. The 56-residue stretch at 1875 to 1930 folds into the DEK-C domain; the sequence is AITDSQLERSIRKICANAELDKLTKKGVRKELEREYGVELTERREAINRLVEKVLT.

The protein in the N-terminal section; belongs to the TRAFAC class CC myosin-kinesin ATPase superfamily. Myosin family. In the C-terminal section; belongs to the chitin synthase family. Class V subfamily.

The protein resides in the cell membrane. The protein localises to the cell septum. Its subcellular location is the cell tip. The enzyme catalyses [(1-&gt;4)-N-acetyl-beta-D-glucosaminyl](n) + UDP-N-acetyl-alpha-D-glucosamine = [(1-&gt;4)-N-acetyl-beta-D-glucosaminyl](n+1) + UDP + H(+). Polymerizes chitin, a structural polymer of the cell wall and septum, by transferring the sugar moiety of UDP-GlcNAc to the non-reducing end of the growing chitin polymer. Produces a large proportion of the chitin that is not deacetylated to chitosan. In Cryptococcus neoformans var. grubii serotype A (strain H99 / ATCC 208821 / CBS 10515 / FGSC 9487) (Filobasidiella neoformans var. grubii), this protein is Chitin synthase 5.